We begin with the raw amino-acid sequence, 155 residues long: 6,7-dimethyl-8-ribityllumazine synthase (155 aa).

5-amino-6-(D-ribitylamino)uracil-binding positions include Phe24, 58–60 (AFE), and 82–84 (VII). 87–88 (ST) is a binding site for (2S)-2-hydroxy-3-oxobutyl phosphate. The active-site Proton donor is the His90. Residue Phe115 coordinates 5-amino-6-(D-ribitylamino)uracil. Arg129 contributes to the (2S)-2-hydroxy-3-oxobutyl phosphate binding site.

It belongs to the DMRL synthase family.

The enzyme catalyses (2S)-2-hydroxy-3-oxobutyl phosphate + 5-amino-6-(D-ribitylamino)uracil = 6,7-dimethyl-8-(1-D-ribityl)lumazine + phosphate + 2 H2O + H(+). Its pathway is cofactor biosynthesis; riboflavin biosynthesis; riboflavin from 2-hydroxy-3-oxobutyl phosphate and 5-amino-6-(D-ribitylamino)uracil: step 1/2. Functionally, catalyzes the formation of 6,7-dimethyl-8-ribityllumazine by condensation of 5-amino-6-(D-ribitylamino)uracil with 3,4-dihydroxy-2-butanone 4-phosphate. This is the penultimate step in the biosynthesis of riboflavin. The protein is 6,7-dimethyl-8-ribityllumazine synthase of Chlorobium phaeobacteroides (strain DSM 266 / SMG 266 / 2430).